The chain runs to 85 residues: Growth factor (85 aa).

The first 19 residues, 1-19 (MVPRDLVATLLCAMCIVQA), serve as a signal peptide directing secretion. One can recognise an EGF-like domain in the interval 33 to 77 (RIKLCNDDYKNYCLNNGTCFTVALNNVSLNPFCACHINYVGSRCQ). Intrachain disulfides connect Cys37–Cys51, Cys45–Cys65, and Cys67–Cys76. Asn48 and Asn58 each carry an N-linked (GlcNAc...) asparagine; by host glycan.

The protein resides in the secreted. Functionally, stimulates the growth of some tissues. The chain is Growth factor (MGF) from Oryctolagus cuniculus (Rabbit).